A 418-amino-acid chain; its full sequence is MFQKPKGTRDFLPVEMKKRKLIEKKLRNIFDSYNFSEINTPTFESFELLSKKTGEEIRNQLFVFNDHGNREMGLRPEFTSSVARFYINEFKNTPKPVKMYYFGNCFRYENPQAGRYREFWQMGAELIGSNKSISDAEVLNMAIEGLKSINMDFEINIGHLGVLKGVFEKYSLSEEDETLIRRLIDKEDTEGLKQVLLKIEEEKNIEISKKVFEVLTLKGGKEVISKLKEKLTDFEKSLDALNNLDEILELVPHDYVVNFGIARGLDYYTGMVFEIYGKKEGARQVCGGGRYDNLIELFEGEKSPAVGFAYGFDRIILNIDDFEVQDDSIFIIPVKNDIFLLKECLKIAKTLRDFGNPVEIDLMGRKLNKALNYANSKNIKRVIIIGENDIFSGKIPLKNMETGEQVLIDVKDLKNFPC.

This sequence belongs to the class-II aminoacyl-tRNA synthetase family.

It is found in the cytoplasm. The catalysed reaction is tRNA(His) + L-histidine + ATP = L-histidyl-tRNA(His) + AMP + diphosphate + H(+). The protein is Histidine--tRNA ligase of Methanococcus vannielii (strain ATCC 35089 / DSM 1224 / JCM 13029 / OCM 148 / SB).